The chain runs to 880 residues: Alanine--tRNA ligase (880 aa).

Positions 566, 570, 668, and 672 each coordinate Zn(2+).

The protein belongs to the class-II aminoacyl-tRNA synthetase family. The cofactor is Zn(2+).

Its subcellular location is the cytoplasm. The enzyme catalyses tRNA(Ala) + L-alanine + ATP = L-alanyl-tRNA(Ala) + AMP + diphosphate. Its function is as follows. Catalyzes the attachment of alanine to tRNA(Ala) in a two-step reaction: alanine is first activated by ATP to form Ala-AMP and then transferred to the acceptor end of tRNA(Ala). Also edits incorrectly charged Ser-tRNA(Ala) and Gly-tRNA(Ala) via its editing domain. The sequence is that of Alanine--tRNA ligase from Nostoc punctiforme (strain ATCC 29133 / PCC 73102).